Consider the following 322-residue polypeptide: Phosphatidylserine decarboxylase proenzyme (322 aa).

Catalysis depends on charge relay system; for autoendoproteolytic cleavage activity residues D90, H147, and S254. The active-site Schiff-base intermediate with substrate; via pyruvic acid; for decarboxylase activity is S254. Position 254 is a pyruvic acid (Ser); by autocatalysis (S254). Residues 293 to 322 (PDAEPAPLPAEEIEAEHDASPLVDDKKDQV) form a disordered region. Residues 308–322 (EHDASPLVDDKKDQV) show a composition bias toward basic and acidic residues.

This sequence belongs to the phosphatidylserine decarboxylase family. PSD-B subfamily. Prokaryotic type I sub-subfamily. As to quaternary structure, heterodimer of a large membrane-associated beta subunit and a small pyruvoyl-containing alpha subunit. It depends on pyruvate as a cofactor. Is synthesized initially as an inactive proenzyme. Formation of the active enzyme involves a self-maturation process in which the active site pyruvoyl group is generated from an internal serine residue via an autocatalytic post-translational modification. Two non-identical subunits are generated from the proenzyme in this reaction, and the pyruvate is formed at the N-terminus of the alpha chain, which is derived from the carboxyl end of the proenzyme. The autoendoproteolytic cleavage occurs by a canonical serine protease mechanism, in which the side chain hydroxyl group of the serine supplies its oxygen atom to form the C-terminus of the beta chain, while the remainder of the serine residue undergoes an oxidative deamination to produce ammonia and the pyruvoyl prosthetic group on the alpha chain. During this reaction, the Ser that is part of the protease active site of the proenzyme becomes the pyruvoyl prosthetic group, which constitutes an essential element of the active site of the mature decarboxylase.

The protein localises to the cell membrane. It carries out the reaction a 1,2-diacyl-sn-glycero-3-phospho-L-serine + H(+) = a 1,2-diacyl-sn-glycero-3-phosphoethanolamine + CO2. It participates in phospholipid metabolism; phosphatidylethanolamine biosynthesis; phosphatidylethanolamine from CDP-diacylglycerol: step 2/2. In terms of biological role, catalyzes the formation of phosphatidylethanolamine (PtdEtn) from phosphatidylserine (PtdSer). In Escherichia coli O9:H4 (strain HS), this protein is Phosphatidylserine decarboxylase proenzyme.